We begin with the raw amino-acid sequence, 414 residues long: Gamma-glutamyl phosphate reductase (414 aa).

This sequence belongs to the gamma-glutamyl phosphate reductase family.

It is found in the cytoplasm. It catalyses the reaction L-glutamate 5-semialdehyde + phosphate + NADP(+) = L-glutamyl 5-phosphate + NADPH + H(+). It participates in amino-acid biosynthesis; L-proline biosynthesis; L-glutamate 5-semialdehyde from L-glutamate: step 2/2. Catalyzes the NADPH-dependent reduction of L-glutamate 5-phosphate into L-glutamate 5-semialdehyde and phosphate. The product spontaneously undergoes cyclization to form 1-pyrroline-5-carboxylate. In Limosilactobacillus reuteri (strain DSM 20016) (Lactobacillus reuteri), this protein is Gamma-glutamyl phosphate reductase.